The following is a 256-amino-acid chain: MATVDLNADMGESFGSWKAGDDESLLGIVTSANVACGFHAGDAVVMGQTCKAAAEHGVCIGAHVSYRDLAGFGRNFIDVDPGRLRDEVIYQLSALRGIAAVHGASVRYVKPHGALYNTIVHHQAQAKAVVEAIDAVNSATGADMAILGLPGALVLDLAEQQGVRTLSEVFADRAYNPDGTLVSRRQEGSVLHDPGEVAERVVTLVTQGSVTAIDGTKVPIKADSVCVHGDTPGAVAMATAVRDRLASTGIELRAAA.

Belongs to the LamB/PxpA family. Forms a complex composed of PxpA, PxpB and PxpC.

It carries out the reaction 5-oxo-L-proline + ATP + 2 H2O = L-glutamate + ADP + phosphate + H(+). In terms of biological role, catalyzes the cleavage of 5-oxoproline to form L-glutamate coupled to the hydrolysis of ATP to ADP and inorganic phosphate. The chain is 5-oxoprolinase subunit A from Cutibacterium acnes (strain DSM 16379 / KPA171202) (Propionibacterium acnes).